The chain runs to 520 residues: RNA polymerase sigma factor sigA (520 aa).

Residues 1-66 (MTATPAVIGL…APATPKLTAV (66 aa)) constitute a chloroplast transit peptide. The segment covering 37–49 (GGGGGGGGGGGGD) has biased composition (gly residues). Disordered stretches follow at residues 37–57 (GGGGGGGGGGGGDAMSFAPPA), 87–117 (HHSSAAAALAPPPPPPPPPTPSPASRAAHAH), and 171–190 (SVSARQRRMSGRRRGRTKNG). The span at 96–108 (APPPPPPPPPTPS) shows a compositional bias: pro residues. The segment covering 175–187 (RQRRMSGRRRGRT) has biased composition (basic residues). The Polymerase core binding signature appears at 305–318 (DLIQGGLIGLLRGI). The H-T-H motif DNA-binding region spans 479-498 (WEDISRQFGLSRERVRQVGL).

This sequence belongs to the sigma-70 factor family. As to expression, expressed in shoots. Expressed in the tips of fully elongated leaves. Expressed in leaf blades.

It is found in the plastid. Its subcellular location is the chloroplast. Sigma factors are initiation factors that promote the attachment of plastid-encoded RNA polymerase (PEP) to specific initiation sites and are then released. Controls the transcription of the psaA and psaB genes in chloroplast, and thus maintains the abundance of the core protein complex PsaA-PsaB of photosystem I (PSI) in the thylakoid membrane. Maintains PSI activity, sufficient rate of electron transfer from PSII to PSI, and photochemical efficiency. The sequence is that of RNA polymerase sigma factor sigA from Oryza sativa subsp. japonica (Rice).